A 193-amino-acid chain; its full sequence is Chlorate reductase assembly chaperone protein (193 aa).

It belongs to the type II DMSO reductase enzyme chaperone family.

It is found in the cytoplasm. May function as a system-specific chaperone protein essential for the assembly of an active chlorate reductase ClrABC. This is Chlorate reductase assembly chaperone protein (clrD) from Ideonella dechloratans.